The following is a 136-amino-acid chain: Large ribosomal subunit protein eL27 (136 aa).

The region spanning 5–40 is the KOW domain; that stretch reads MKPGKVVMVLAGRYAGRKAVIVKNIDDGTADRPYSH.

The protein belongs to the eukaryotic ribosomal protein eL27 family. In terms of assembly, component of the large ribosomal subunit.

It is found in the cytoplasm. It localises to the cytosol. The protein localises to the rough endoplasmic reticulum. Functionally, component of the large ribosomal subunit. In Hippocampus comes (Tiger tail seahorse), this protein is Large ribosomal subunit protein eL27 (rpl27).